A 245-amino-acid polypeptide reads, in one-letter code: MDRSPLFLIIMGAPGSGKGTQSKLLASQLSLLHISSGDLLRGAVSKDTPLSQEIKSYLDQGKLLPDTLVWKLVHEKLDEFQQDTLLRRLSFLSRSENSAILDGFPRTVTQAKLLHEFLSSYFPNYKVILLDISDEEVLNRLTSRYICPACQGIYNEQQGFSSCPKCSVELIRRSDDTLEVILDRIQTYKQETQPVLDYYTEKQKLITIDANAPTQQVFQSILDSLSASLVYQERDCCNCDCDDED.

Glycine 15–threonine 20 is an ATP binding site. Residues serine 35–leucine 64 are NMP. AMP is bound by residues serine 36, arginine 41, lysine 62–leucine 64, glycine 103–arginine 106, and glutamine 110. An LID region spans residues serine 143 to aspartate 176. ATP is bound at residue arginine 144. Zn(2+)-binding residues include cysteine 147 and cysteine 150. An ATP-binding site is contributed by isoleucine 153 to tyrosine 154. Positions 163 and 166 each coordinate Zn(2+). Arginine 173 and arginine 184 together coordinate AMP. Alanine 212 contacts ATP.

This sequence belongs to the adenylate kinase family. As to quaternary structure, monomer.

The protein localises to the cytoplasm. The enzyme catalyses AMP + ATP = 2 ADP. It functions in the pathway purine metabolism; AMP biosynthesis via salvage pathway; AMP from ADP: step 1/1. Its function is as follows. Catalyzes the reversible transfer of the terminal phosphate group between ATP and AMP. Plays an important role in cellular energy homeostasis and in adenine nucleotide metabolism. This Chlamydia trachomatis serovar L2 (strain ATCC VR-902B / DSM 19102 / 434/Bu) protein is Adenylate kinase.